The sequence spans 96 residues: Co-chaperonin GroES (96 aa).

The protein belongs to the GroES chaperonin family. As to quaternary structure, heptamer of 7 subunits arranged in a ring. Interacts with the chaperonin GroEL.

It is found in the cytoplasm. In terms of biological role, together with the chaperonin GroEL, plays an essential role in assisting protein folding. The GroEL-GroES system forms a nano-cage that allows encapsulation of the non-native substrate proteins and provides a physical environment optimized to promote and accelerate protein folding. GroES binds to the apical surface of the GroEL ring, thereby capping the opening of the GroEL channel. This Buchnera aphidicola subsp. Schizaphis graminum (strain Sg) protein is Co-chaperonin GroES.